The sequence spans 557 residues: Formate--tetrahydrofolate ligase (557 aa).

ATP is bound at residue 66 to 73 (TPAGEGKS).

This sequence belongs to the formate--tetrahydrofolate ligase family.

The enzyme catalyses (6S)-5,6,7,8-tetrahydrofolate + formate + ATP = (6R)-10-formyltetrahydrofolate + ADP + phosphate. Its pathway is one-carbon metabolism; tetrahydrofolate interconversion. The protein is Formate--tetrahydrofolate ligase of Lactobacillus johnsonii (strain CNCM I-12250 / La1 / NCC 533).